We begin with the raw amino-acid sequence, 198 residues long: Threonylcarbamoyl-AMP synthase (198 aa).

One can recognise a YrdC-like domain in the interval 15–198 (LLKIYHIIKL…AISGQLIRRG (184 aa)).

The protein belongs to the SUA5 family. TsaC subfamily.

Its subcellular location is the cytoplasm. It carries out the reaction L-threonine + hydrogencarbonate + ATP = L-threonylcarbamoyladenylate + diphosphate + H2O. Its function is as follows. Required for the formation of a threonylcarbamoyl group on adenosine at position 37 (t(6)A37) in tRNAs that read codons beginning with adenine. Catalyzes the conversion of L-threonine, HCO(3)(-)/CO(2) and ATP to give threonylcarbamoyl-AMP (TC-AMP) as the acyladenylate intermediate, with the release of diphosphate. The chain is Threonylcarbamoyl-AMP synthase from Baumannia cicadellinicola subsp. Homalodisca coagulata.